A 503-amino-acid chain; its full sequence is Probable cytosol aminopeptidase (503 aa).

K268 and D273 together coordinate Mn(2+). The active site involves K280. Residues D291, D350, and E352 each contribute to the Mn(2+) site. The active site involves R354.

Belongs to the peptidase M17 family. The cofactor is Mn(2+).

Its subcellular location is the cytoplasm. It carries out the reaction Release of an N-terminal amino acid, Xaa-|-Yaa-, in which Xaa is preferably Leu, but may be other amino acids including Pro although not Arg or Lys, and Yaa may be Pro. Amino acid amides and methyl esters are also readily hydrolyzed, but rates on arylamides are exceedingly low.. The catalysed reaction is Release of an N-terminal amino acid, preferentially leucine, but not glutamic or aspartic acids.. In terms of biological role, presumably involved in the processing and regular turnover of intracellular proteins. Catalyzes the removal of unsubstituted N-terminal amino acids from various peptides. This Corynebacterium efficiens (strain DSM 44549 / YS-314 / AJ 12310 / JCM 11189 / NBRC 100395) protein is Probable cytosol aminopeptidase.